Consider the following 277-residue polypeptide: Orotidine 5'-phosphate decarboxylase (277 aa).

Residues D40, 62–64, 93–102, Y229, and R247 each bind substrate; these read KTH and DRKFIDIGNT. K95 (proton donor) is an active-site residue.

The protein belongs to the OMP decarboxylase family.

It carries out the reaction orotidine 5'-phosphate + H(+) = UMP + CO2. It participates in pyrimidine metabolism; UMP biosynthesis via de novo pathway; UMP from orotate: step 2/2. The polypeptide is Orotidine 5'-phosphate decarboxylase (pyrG) (Aspergillus kawachii (White koji mold)).